Reading from the N-terminus, the 397-residue chain is P2X purinoceptor 3 (397 aa).

Residues 1–20 (MNCISDFFTYETTKSVVVKS) are Cytoplasmic-facing. The chain crosses the membrane as a helical span at residues 21 to 43 (WTIGIINRAVQLLIISYFVGWVF). The Extracellular portion of the chain corresponds to 44–322 (LHEKAYQVRD…AGKFNIIPTI (279 aa)). Lys-63 and Lys-65 together coordinate ATP. Disulfide bonds link Cys-107–Cys-153, Cys-116–Cys-137, and Cys-122–Cys-147. Mg(2+) is bound at residue Glu-111. Asn-139 is a glycosylation site (N-linked (GlcNAc...) asparagine). Asp-158 serves as a coordination point for Mg(2+). Residue Asp-158 coordinates Ca(2+). Asn-170 is a glycosylation site (N-linked (GlcNAc...) asparagine). Thr-172 is an ATP binding site. N-linked (GlcNAc...) asparagine glycosylation is present at Asn-194. Disulfide bonds link Cys-203/Cys-213 and Cys-247/Cys-256. Residues Ser-275, Asn-279, and Arg-281 each contribute to the ATP site. Asn-290 is a glycosylation site (N-linked (GlcNAc...) asparagine). Lys-299 is a binding site for ATP. A helical transmembrane segment spans residues 323–341 (ISSVAAFTSVGVGTVLCDI). Topologically, residues 342–397 (ILLNFLKGADHYKARKFEEVTETTLKGTASTNPVFASDQATVEKQSTDSGAYSIGH) are cytoplasmic.

This sequence belongs to the P2X receptor family. As to quaternary structure, homotrimer. Forms heterotrimer with P2RX2. Heterotrimeric P2RX2/3 has a ligand dose-response profile that is distinct from either homotrimeric P2RX2 or P2RX3. Selectively expressed in sensory ganglia.

It is found in the cell membrane. The enzyme catalyses Ca(2+)(in) = Ca(2+)(out). It catalyses the reaction Na(+)(in) = Na(+)(out). Has high sensitivity to ATP. Fast activation by external ATP. Exhibits rapid desensitization. Sensitives to the ATP agonist:alpha/beta-methylene-ATP. Subject to allosteric inhibition by AF-219. Mg(2+) and Ca(2+) slow deactivation of P2RX3. Functionally, extracellular ATP-activated non-selective cation channel. Plays particularly important role in sensory neurons where its activation is critical for gustatory, nociceptive responses, visceral reflexes and sensory hypersensitization. The polypeptide is P2X purinoceptor 3 (P2rx3) (Rattus norvegicus (Rat)).